The chain runs to 455 residues: Bifunctional protein GlmU (455 aa).

Residues 1–229 (MLNSAMSVVI…ISETEGVNNR (229 aa)) are pyrophosphorylase. Residues 11-14 (LAAG), Lys25, Gln76, 81-82 (GT), 103-105 (YGD), Gly140, Glu154, Asn169, and Asn227 each bind UDP-N-acetyl-alpha-D-glucosamine. A Mg(2+)-binding site is contributed by Asp105. A Mg(2+)-binding site is contributed by Asn227. The segment at 230 to 250 (LQLSRLERIYQAEQAEKLLLA) is linker. The segment at 251–455 (GVMLRDPARF…KQGWQRPVKK (205 aa)) is N-acetyltransferase. The UDP-N-acetyl-alpha-D-glucosamine site is built by Arg333 and Lys351. His363 (proton acceptor) is an active-site residue. Residues Tyr366 and Asn377 each coordinate UDP-N-acetyl-alpha-D-glucosamine. Acetyl-CoA-binding positions include Ala380, 386 to 387 (NY), Ser405, Ala423, and Arg440.

It in the N-terminal section; belongs to the N-acetylglucosamine-1-phosphate uridyltransferase family. The protein in the C-terminal section; belongs to the transferase hexapeptide repeat family. Homotrimer. The cofactor is Mg(2+).

It is found in the cytoplasm. The enzyme catalyses alpha-D-glucosamine 1-phosphate + acetyl-CoA = N-acetyl-alpha-D-glucosamine 1-phosphate + CoA + H(+). The catalysed reaction is N-acetyl-alpha-D-glucosamine 1-phosphate + UTP + H(+) = UDP-N-acetyl-alpha-D-glucosamine + diphosphate. Its pathway is nucleotide-sugar biosynthesis; UDP-N-acetyl-alpha-D-glucosamine biosynthesis; N-acetyl-alpha-D-glucosamine 1-phosphate from alpha-D-glucosamine 6-phosphate (route II): step 2/2. It participates in nucleotide-sugar biosynthesis; UDP-N-acetyl-alpha-D-glucosamine biosynthesis; UDP-N-acetyl-alpha-D-glucosamine from N-acetyl-alpha-D-glucosamine 1-phosphate: step 1/1. It functions in the pathway bacterial outer membrane biogenesis; LPS lipid A biosynthesis. Functionally, catalyzes the last two sequential reactions in the de novo biosynthetic pathway for UDP-N-acetylglucosamine (UDP-GlcNAc). The C-terminal domain catalyzes the transfer of acetyl group from acetyl coenzyme A to glucosamine-1-phosphate (GlcN-1-P) to produce N-acetylglucosamine-1-phosphate (GlcNAc-1-P), which is converted into UDP-GlcNAc by the transfer of uridine 5-monophosphate (from uridine 5-triphosphate), a reaction catalyzed by the N-terminal domain. This Salmonella arizonae (strain ATCC BAA-731 / CDC346-86 / RSK2980) protein is Bifunctional protein GlmU.